A 142-amino-acid chain; its full sequence is Secreted RxLR effector protein 161 (142 aa).

An N-terminal signal peptide occupies residues 1-27 (MKNVPYLSAVGAIMYLMVVTRPDLAAA). Positions 48–51 (RVLR) match the RxLR motif.

Belongs to the RxLR effector family.

It localises to the secreted. It is found in the host chloroplast envelope. Its subcellular location is the host nucleus. In terms of biological role, secreted effector that completely suppresses the host cell death induced by cell death-inducing proteins. The polypeptide is Secreted RxLR effector protein 161 (Plasmopara viticola (Downy mildew of grapevine)).